The sequence spans 562 residues: Dihydroxy-acid dehydratase (562 aa).

Asp80 serves as a coordination point for Mg(2+). Cys121 contacts [2Fe-2S] cluster. Mg(2+)-binding residues include Asp122 and Lys123. Lys123 carries the post-translational modification N6-carboxylysine. Cys194 provides a ligand contact to [2Fe-2S] cluster. Glu446 lines the Mg(2+) pocket. Residue Ser472 is the Proton acceptor of the active site.

Belongs to the IlvD/Edd family. Homodimer. Requires [2Fe-2S] cluster as cofactor. Mg(2+) is required as a cofactor.

It carries out the reaction (2R)-2,3-dihydroxy-3-methylbutanoate = 3-methyl-2-oxobutanoate + H2O. The catalysed reaction is (2R,3R)-2,3-dihydroxy-3-methylpentanoate = (S)-3-methyl-2-oxopentanoate + H2O. It participates in amino-acid biosynthesis; L-isoleucine biosynthesis; L-isoleucine from 2-oxobutanoate: step 3/4. The protein operates within amino-acid biosynthesis; L-valine biosynthesis; L-valine from pyruvate: step 3/4. Functions in the biosynthesis of branched-chain amino acids. Catalyzes the dehydration of (2R,3R)-2,3-dihydroxy-3-methylpentanoate (2,3-dihydroxy-3-methylvalerate) into 2-oxo-3-methylpentanoate (2-oxo-3-methylvalerate) and of (2R)-2,3-dihydroxy-3-methylbutanoate (2,3-dihydroxyisovalerate) into 2-oxo-3-methylbutanoate (2-oxoisovalerate), the penultimate precursor to L-isoleucine and L-valine, respectively. The sequence is that of Dihydroxy-acid dehydratase from Staphylococcus aureus (strain Mu50 / ATCC 700699).